The primary structure comprises 189 residues: Probable nicotinate-nucleotide adenylyltransferase (189 aa).

This sequence belongs to the NadD family.

The enzyme catalyses nicotinate beta-D-ribonucleotide + ATP + H(+) = deamido-NAD(+) + diphosphate. It participates in cofactor biosynthesis; NAD(+) biosynthesis; deamido-NAD(+) from nicotinate D-ribonucleotide: step 1/1. Functionally, catalyzes the reversible adenylation of nicotinate mononucleotide (NaMN) to nicotinic acid adenine dinucleotide (NaAD). This chain is Probable nicotinate-nucleotide adenylyltransferase, found in Bacillus cereus (strain B4264).